A 426-amino-acid chain; its full sequence is Adenylosuccinate synthetase (426 aa).

GTP-binding positions include 13–19 (GDEGKGK) and 41–43 (GHT). Residue D14 is the Proton acceptor of the active site. The Mg(2+) site is built by D14 and G41. Residues 14–17 (DEGK), 39–42 (NAGH), T129, R143, Q224, T239, and R303 contribute to the IMP site. The active-site Proton donor is the H42. Residue 299 to 305 (TTTGRPR) participates in substrate binding. GTP contacts are provided by residues R305, 331–333 (KLD), and 414–416 (GTG).

This sequence belongs to the adenylosuccinate synthetase family. As to quaternary structure, homodimer. It depends on Mg(2+) as a cofactor.

The protein localises to the cytoplasm. It carries out the reaction IMP + L-aspartate + GTP = N(6)-(1,2-dicarboxyethyl)-AMP + GDP + phosphate + 2 H(+). It functions in the pathway purine metabolism; AMP biosynthesis via de novo pathway; AMP from IMP: step 1/2. Its function is as follows. Plays an important role in the de novo pathway of purine nucleotide biosynthesis. Catalyzes the first committed step in the biosynthesis of AMP from IMP. In Caldicellulosiruptor bescii (strain ATCC BAA-1888 / DSM 6725 / KCTC 15123 / Z-1320) (Anaerocellum thermophilum), this protein is Adenylosuccinate synthetase.